A 240-amino-acid polypeptide reads, in one-letter code: ATP-dependent dethiobiotin synthetase BioD (240 aa).

Glu15–Phe20 contributes to the ATP binding site. A Mg(2+)-binding site is contributed by Thr19. Lys40 is a catalytic residue. Residues Asp57, Glu118–Gly121, and Asn178–Arg179 each bind ATP. Mg(2+) contacts are provided by Asp57 and Glu118.

Belongs to the dethiobiotin synthetase family. Homodimer. It depends on Mg(2+) as a cofactor.

The protein resides in the cytoplasm. The enzyme catalyses (7R,8S)-7,8-diammoniononanoate + CO2 + ATP = (4R,5S)-dethiobiotin + ADP + phosphate + 3 H(+). The protein operates within cofactor biosynthesis; biotin biosynthesis; biotin from 7,8-diaminononanoate: step 1/2. In terms of biological role, catalyzes a mechanistically unusual reaction, the ATP-dependent insertion of CO2 between the N7 and N8 nitrogen atoms of 7,8-diaminopelargonic acid (DAPA, also called 7,8-diammoniononanoate) to form a ureido ring. The sequence is that of ATP-dependent dethiobiotin synthetase BioD from Burkholderia mallei (strain NCTC 10247).